The sequence spans 70 residues: Sporulation protein YhaL (70 aa).

The chain crosses the membrane as a helical span at residues 3-23; sequence FFPWWVYLCIVGIIFSAYKLV. The interval 48–70 is disordered; it reads MEKERERRSSQQHEEENQNHSIA.

It localises to the cell membrane. Functionally, required for efficient sporulation. This Bacillus subtilis (strain 168) protein is Sporulation protein YhaL (yhaL).